A 451-amino-acid polypeptide reads, in one-letter code: UDP-N-acetylmuramoylalanine--D-glutamate ligase (451 aa).

Residue 119 to 125 coordinates ATP; that stretch reads GSNGKTT.

Belongs to the MurCDEF family.

Its subcellular location is the cytoplasm. It carries out the reaction UDP-N-acetyl-alpha-D-muramoyl-L-alanine + D-glutamate + ATP = UDP-N-acetyl-alpha-D-muramoyl-L-alanyl-D-glutamate + ADP + phosphate + H(+). The protein operates within cell wall biogenesis; peptidoglycan biosynthesis. In terms of biological role, cell wall formation. Catalyzes the addition of glutamate to the nucleotide precursor UDP-N-acetylmuramoyl-L-alanine (UMA). The chain is UDP-N-acetylmuramoylalanine--D-glutamate ligase from Geobacillus kaustophilus (strain HTA426).